The chain runs to 134 residues: Small ribosomal subunit protein uS11 (134 aa).

It belongs to the universal ribosomal protein uS11 family. In terms of assembly, part of the 30S ribosomal subunit. Interacts with proteins S7 and S18. Binds to IF-3.

Its function is as follows. Located on the platform of the 30S subunit, it bridges several disparate RNA helices of the 16S rRNA. Forms part of the Shine-Dalgarno cleft in the 70S ribosome. This is Small ribosomal subunit protein uS11 from Paraburkholderia xenovorans (strain LB400).